We begin with the raw amino-acid sequence, 281 residues long: Pantothenate synthetase (281 aa).

Position 30–37 (30–37) interacts with ATP; the sequence is MGALHRGH. Catalysis depends on His37, which acts as the Proton donor. Gln61 lines the (R)-pantoate pocket. Residue Gln61 coordinates beta-alanine. 147-150 provides a ligand contact to ATP; that stretch reads GEKD. Gln153 contributes to the (R)-pantoate binding site. Residues Ile176 and 184 to 187 each bind ATP; that span reads LSSR.

It belongs to the pantothenate synthetase family. As to quaternary structure, homodimer.

Its subcellular location is the cytoplasm. The enzyme catalyses (R)-pantoate + beta-alanine + ATP = (R)-pantothenate + AMP + diphosphate + H(+). Its pathway is cofactor biosynthesis; (R)-pantothenate biosynthesis; (R)-pantothenate from (R)-pantoate and beta-alanine: step 1/1. Its function is as follows. Catalyzes the condensation of pantoate with beta-alanine in an ATP-dependent reaction via a pantoyl-adenylate intermediate. This chain is Pantothenate synthetase, found in Porphyromonas gingivalis (strain ATCC BAA-308 / W83).